Consider the following 564-residue polypeptide: Membrane protein insertase YidC (564 aa).

A helical transmembrane segment spans residues 7–24; it reads VLWVVFSFSLLMLWDNYN. The span at 43–60 shows a compositional bias: low complexity; it reads KPAAATDDGKTAAAPTAD. Residues 43 to 76 are disordered; the sequence is KPAAATDDGKTAAAPTADVPTSSAHAANATGVPD. The next 6 membrane-spanning stretches (helical) occupy residues 293–313, 341–361, 364–384, 438–458, 483–503, and 524–544; these read LATN…APGA, VKDY…MIQI, LLGN…LAFF, MPIV…LASV, IGSF…SMFI, and PIAF…YWVV.

Belongs to the OXA1/ALB3/YidC family. Type 1 subfamily. In terms of assembly, interacts with the Sec translocase complex via SecD. Specifically interacts with transmembrane segments of nascent integral membrane proteins during membrane integration.

It localises to the cell inner membrane. Required for the insertion and/or proper folding and/or complex formation of integral membrane proteins into the membrane. Involved in integration of membrane proteins that insert both dependently and independently of the Sec translocase complex, as well as at least some lipoproteins. Aids folding of multispanning membrane proteins. In Janthinobacterium sp. (strain Marseille) (Minibacterium massiliensis), this protein is Membrane protein insertase YidC.